The sequence spans 346 residues: Uroporphyrinogen decarboxylase (346 aa).

Residues 23–27 (RQAGR), aspartate 73, tyrosine 151, serine 206, and histidine 321 each bind substrate.

The protein belongs to the uroporphyrinogen decarboxylase family. In terms of assembly, homodimer.

Its subcellular location is the cytoplasm. It carries out the reaction uroporphyrinogen III + 4 H(+) = coproporphyrinogen III + 4 CO2. The protein operates within porphyrin-containing compound metabolism; protoporphyrin-IX biosynthesis; coproporphyrinogen-III from 5-aminolevulinate: step 4/4. Its function is as follows. Catalyzes the decarboxylation of four acetate groups of uroporphyrinogen-III to yield coproporphyrinogen-III. The protein is Uroporphyrinogen decarboxylase of Sulfurovum sp. (strain NBC37-1).